Here is a 249-residue protein sequence, read N- to C-terminus: Large ribosomal subunit protein uL16m (249 aa).

It belongs to the universal ribosomal protein uL16 family. As to quaternary structure, component of the mitochondrial large ribosomal subunit (mt-LSU). Mature N.crassa 74S mitochondrial ribosomes consist of a small (37S) and a large (54S) subunit. The 37S small subunit contains a 16S ribosomal RNA (16S mt-rRNA) and 32 different proteins. The 54S large subunit contains a 23S rRNA (23S mt-rRNA) and 42 different proteins.

The protein localises to the mitochondrion. In terms of biological role, component of the mitochondrial ribosome (mitoribosome), a dedicated translation machinery responsible for the synthesis of mitochondrial genome-encoded proteins, including at least some of the essential transmembrane subunits of the mitochondrial respiratory chain. The mitoribosomes are attached to the mitochondrial inner membrane and translation products are cotranslationally integrated into the membrane. The sequence is that of Large ribosomal subunit protein uL16m (mrpl16) from Neurospora crassa (strain ATCC 24698 / 74-OR23-1A / CBS 708.71 / DSM 1257 / FGSC 987).